A 360-amino-acid chain; its full sequence is Homeobox protein ceh-60 (360 aa).

The segment at 1 to 82 (MDNLIKQLQM…ENPTFPLEEV (82 aa)) is PBC-A. In terms of domain architecture, PBC spans 1–179 (MDNLIKQLQM…ILVLRREIEQ (179 aa)). Residues 85-179 (EKDEEWQPLE…ILVLRREIEQ (95 aa)) are PBC-B. The homeobox DNA-binding region spans 180-242 (QGRKRRNFDK…NQRIRTKQQA (63 aa)).

Belongs to the TALE/PBX homeobox family. Forms a heterodimer with homeobox unc-62. Interacts with pqm-1.

The protein resides in the nucleus. Probable transcription regulator which binds to DNA, repressing genes involved in longevity and stress, while activating genes involved in reproduction, such as the vitellogenins. Associates with homeobox unc-62 to regulate gene expression, including repression of genes involved in innate immunity. Required for intestinal expression of vitellogenin genes. Negatively modulates longevity, probably independently of effects on vitellogenesis. Involved in lipid homeostasis, contributing to the reallocation of intestinal lipids to the germline and to the formation of the cuticle. Associates with transcriptional regulator pqm-1 at the daf-16 associated element within the promoters of stress-responsive genes to regulate expression. This Caenorhabditis elegans protein is Homeobox protein ceh-60.